The chain runs to 353 residues: Photosystem II D2 protein (353 aa).

Threonine 2 carries the N-acetylthreonine modification. Threonine 2 carries the phosphothreonine modification. Residues 41-61 form a helical membrane-spanning segment; the sequence is CAYFALGGWFTGTTFVTSWYT. Histidine 118 serves as a coordination point for chlorophyll a. Residues 125-141 form a helical membrane-spanning segment; sequence GFMLRQFELARSVQLRP. Glutamine 130 and asparagine 143 together coordinate pheophytin a. The chain crosses the membrane as a helical span at residues 153 to 166; the sequence is VFVSVFLIYPLGQS. A chlorophyll a-binding site is contributed by histidine 198. Residues 208–228 form a helical membrane-spanning segment; sequence AALLCAIHGATVENTLFEDGD. A plastoquinone is bound by residues histidine 215 and phenylalanine 262. Histidine 215 contacts Fe cation. Fe cation is bound at residue histidine 269. A helical membrane pass occupies residues 279-295; the sequence is GLWMSALGVVGLALNLR.

The protein belongs to the reaction center PufL/M/PsbA/D family. PSII is composed of 1 copy each of membrane proteins PsbA, PsbB, PsbC, PsbD, PsbE, PsbF, PsbH, PsbI, PsbJ, PsbK, PsbL, PsbM, PsbT, PsbX, PsbY, PsbZ, Psb30/Ycf12, at least 3 peripheral proteins of the oxygen-evolving complex and a large number of cofactors. It forms dimeric complexes. The cofactor is The D1/D2 heterodimer binds P680, chlorophylls that are the primary electron donor of PSII, and subsequent electron acceptors. It shares a non-heme iron and each subunit binds pheophytin, quinone, additional chlorophylls, carotenoids and lipids. There is also a Cl(-1) ion associated with D1 and D2, which is required for oxygen evolution. The PSII complex binds additional chlorophylls, carotenoids and specific lipids..

Its subcellular location is the plastid. It is found in the chloroplast thylakoid membrane. It carries out the reaction 2 a plastoquinone + 4 hnu + 2 H2O = 2 a plastoquinol + O2. Its function is as follows. Photosystem II (PSII) is a light-driven water:plastoquinone oxidoreductase that uses light energy to abstract electrons from H(2)O, generating O(2) and a proton gradient subsequently used for ATP formation. It consists of a core antenna complex that captures photons, and an electron transfer chain that converts photonic excitation into a charge separation. The D1/D2 (PsbA/PsbD) reaction center heterodimer binds P680, the primary electron donor of PSII as well as several subsequent electron acceptors. D2 is needed for assembly of a stable PSII complex. This Morus indica (Mulberry) protein is Photosystem II D2 protein.